Here is a 351-residue protein sequence, read N- to C-terminus: Methylthioribose-1-phosphate isomerase (351 aa).

Residues 51 to 53, Arg94, and Gln199 each bind substrate; that span reads RGA. The active-site Proton donor is the Asp240. Residue 250-251 coordinates substrate; sequence NK.

The protein belongs to the EIF-2B alpha/beta/delta subunits family. MtnA subfamily. As to quaternary structure, homodimer.

It catalyses the reaction 5-(methylsulfanyl)-alpha-D-ribose 1-phosphate = 5-(methylsulfanyl)-D-ribulose 1-phosphate. It functions in the pathway amino-acid biosynthesis; L-methionine biosynthesis via salvage pathway; L-methionine from S-methyl-5-thio-alpha-D-ribose 1-phosphate: step 1/6. Its function is as follows. Catalyzes the interconversion of methylthioribose-1-phosphate (MTR-1-P) into methylthioribulose-1-phosphate (MTRu-1-P). The polypeptide is Methylthioribose-1-phosphate isomerase (Bacillus cereus (strain ZK / E33L)).